A 446-amino-acid polypeptide reads, in one-letter code: Anthranilate N-benzoyltransferase protein 2 (446 aa).

Residues His164 and Asp393 each act as proton acceptor in the active site.

Belongs to the plant acyltransferase family. In terms of processing, N-terminus is blocked.

It carries out the reaction anthranilate + benzoyl-CoA = N-benzoylanthranilate + CoA. It functions in the pathway phytoalexin biosynthesis; methoxydianthramide B biosynthesis. Catalyzes the formation of N-benzoylanthranilate, in the course of methoxydianthramide B, a phytoalexin. Phytoalexins are produced in response to infection by parasites, and are essential for the expression of disease resistance. This is Anthranilate N-benzoyltransferase protein 2 (HCBT2) from Dianthus caryophyllus (Carnation).